We begin with the raw amino-acid sequence, 112 residues long: Large ribosomal subunit protein uL22 (112 aa).

It belongs to the universal ribosomal protein uL22 family. Part of the 50S ribosomal subunit.

In terms of biological role, this protein binds specifically to 23S rRNA; its binding is stimulated by other ribosomal proteins, e.g. L4, L17, and L20. It is important during the early stages of 50S assembly. It makes multiple contacts with different domains of the 23S rRNA in the assembled 50S subunit and ribosome. The globular domain of the protein is located near the polypeptide exit tunnel on the outside of the subunit, while an extended beta-hairpin is found that lines the wall of the exit tunnel in the center of the 70S ribosome. The sequence is that of Large ribosomal subunit protein uL22 from Anaplasma marginale (strain Florida).